The sequence spans 399 residues: NADH-quinone oxidoreductase subunit D 2 (399 aa).

Positions methionine 1–leucine 20 are disordered. Residues serine 9 to leucine 20 are compositionally biased toward low complexity.

Belongs to the complex I 49 kDa subunit family. In terms of assembly, NDH-1 is composed of 14 different subunits. Subunits NuoB, C, D, E, F, and G constitute the peripheral sector of the complex.

The protein resides in the cell inner membrane. The enzyme catalyses a quinone + NADH + 5 H(+)(in) = a quinol + NAD(+) + 4 H(+)(out). Functionally, NDH-1 shuttles electrons from NADH, via FMN and iron-sulfur (Fe-S) centers, to quinones in the respiratory chain. The immediate electron acceptor for the enzyme in this species is believed to be ubiquinone. Couples the redox reaction to proton translocation (for every two electrons transferred, four hydrogen ions are translocated across the cytoplasmic membrane), and thus conserves the redox energy in a proton gradient. This is NADH-quinone oxidoreductase subunit D 2 from Opitutus terrae (strain DSM 11246 / JCM 15787 / PB90-1).